The sequence spans 173 residues: uncharacterized protein (173 aa).

Disordered regions lie at residues 1–23 (MGDL…GDVA) and 48–173 (TGAA…APQR). Positions 49 to 60 (GAAPGSAQAGPP) are enriched in low complexity. A compositionally biased stretch (pro residues) spans 70–83 (PRGPQAPPRLPPSL). The span at 123-136 (PACAGSSAPGSPAA) shows a compositional bias: low complexity.

This is an uncharacterized protein from Homo sapiens (Human).